Reading from the N-terminus, the 236-residue chain is Ureidoacrylate amidohydrolase RutB (236 aa).

The active-site Proton acceptor is the Asp-24. Lys-133 is an active-site residue. The active-site Nucleophile is Cys-166.

It belongs to the isochorismatase family. RutB subfamily.

The catalysed reaction is (Z)-3-ureidoacrylate + H2O + H(+) = (Z)-3-aminoacrylate + NH4(+) + CO2. It catalyses the reaction (Z)-3-ureidoacrylate + H2O = (Z)-3-aminoacrylate + carbamate + H(+). The enzyme catalyses (Z)-2-methylureidoacrylate + H2O + H(+) = (Z)-2-methylaminoacrylate + NH4(+) + CO2. Its function is as follows. Hydrolyzes ureidoacrylate to form aminoacrylate and carbamate. The carbamate hydrolyzes spontaneously, thereby releasing one of the nitrogen atoms of the pyrimidine ring as ammonia and one of its carbon atoms as CO2. This Klebsiella variicola (strain At-22) protein is Ureidoacrylate amidohydrolase RutB.